The following is a 538-amino-acid chain: Putative cysteine ligase BshC (538 aa).

Residues 454–482 (LEKNAGFIQDQLQFLEKTVIRRIEEKENY) adopt a coiled-coil conformation.

It belongs to the BshC family.

Its function is as follows. Involved in bacillithiol (BSH) biosynthesis. May catalyze the last step of the pathway, the addition of cysteine to glucosamine malate (GlcN-Mal) to generate BSH. The chain is Putative cysteine ligase BshC from Bacillus licheniformis (strain ATCC 14580 / DSM 13 / JCM 2505 / CCUG 7422 / NBRC 12200 / NCIMB 9375 / NCTC 10341 / NRRL NRS-1264 / Gibson 46).